A 317-amino-acid chain; its full sequence is Apolipoprotein E (317 aa).

A signal peptide spans 1-18 (MKVLWAALLVTFLAGCQA). 8 consecutive repeat copies span residues 80–101 (ALMD…EQLT), 102–123 (PVAE…ARLG), 124–145 (ADME…AMLG), 146–167 (QSTE…KRLL), 168–189 (RDAD…EGAE), 190–211 (RGVS…VRAA), 212–233 (TVGS…ERLR), and 234–255 (ARME…EQVA). The 8 X 22 AA approximate tandem repeats stretch occupies residues 80–255 (ALMDETMKEL…RLDEVKEQVA (176 aa)). Position 143 is a methionine sulfoxide (Met-143). Ser-147 is modified (phosphoserine). Residues 158-168 (HLRKLRKRLLR) are LDL and other lipoprotein receptors binding. Residue 162-165 (LRKR) coordinates heparin. A lipid-binding and lipoprotein association region spans residues 210 to 290 (AATVGSLAGQ…SWFEPLVEDM (81 aa)). 229 to 236 (GERLRARM) lines the heparin pocket. The interval 266–317 (QQIRLQAEAFQARLKSWFEPLVEDMQRQWAGLVEKVQAAMGTSAAPVPSDNH) is homooligomerization. The segment at 278 to 290 (RLKSWFEPLVEDM) is specificity for association with VLDL.

Belongs to the apolipoprotein A1/A4/E family. In terms of assembly, homotetramer. May interact with ABCA1; functionally associated with ABCA1 in the biogenesis of HDLs. May interact with APP/A4 amyloid-beta peptide; the interaction is extremely stable in vitro but its physiological significance is unclear. May interact with MAPT. May interact with MAP2. In the cerebrospinal fluid, interacts with secreted SORL1. Interacts with PMEL; this allows the loading of PMEL luminal fragment on ILVs to induce fibril nucleation. Post-translationally, APOE exists as multiple glycosylated and sialylated glycoforms within cells and in plasma. The extent of glycosylation and sialylation are tissue and context specific. Glycated in plasma VLDL. In terms of processing, phosphorylated by FAM20C in the extracellular medium.

It is found in the secreted. The protein resides in the extracellular space. The protein localises to the extracellular matrix. Its subcellular location is the extracellular vesicle. It localises to the endosome. It is found in the multivesicular body. In terms of biological role, APOE is an apolipoprotein, a protein associating with lipid particles, that mainly functions in lipoprotein-mediated lipid transport between organs via the plasma and interstitial fluids. APOE is a core component of plasma lipoproteins and is involved in their production, conversion and clearance. Apolipoproteins are amphipathic molecules that interact both with lipids of the lipoprotein particle core and the aqueous environment of the plasma. As such, APOE associates with chylomicrons, chylomicron remnants, very low density lipoproteins (VLDL) and intermediate density lipoproteins (IDL) but shows a preferential binding to high-density lipoproteins (HDL). It also binds a wide range of cellular receptors including the LDL receptor/LDLR, the LDL receptor-related proteins LRP1, LRP2 and LRP8 and the very low-density lipoprotein receptor/VLDLR that mediate the cellular uptake of the APOE-containing lipoprotein particles. Finally, APOE also has a heparin-binding activity and binds heparan-sulfate proteoglycans on the surface of cells, a property that supports the capture and the receptor-mediated uptake of APOE-containing lipoproteins by cells. A main function of APOE is to mediate lipoprotein clearance through the uptake of chylomicrons, VLDLs, and HDLs by hepatocytes. APOE is also involved in the biosynthesis by the liver of VLDLs as well as their uptake by peripheral tissues ensuring the delivery of triglycerides and energy storage in muscle, heart and adipose tissues. By participating in the lipoprotein-mediated distribution of lipids among tissues, APOE plays a critical role in plasma and tissues lipid homeostasis. APOE is also involved in two steps of reverse cholesterol transport, the HDLs-mediated transport of cholesterol from peripheral tissues to the liver, and thereby plays an important role in cholesterol homeostasis. First, it is functionally associated with ABCA1 in the biogenesis of HDLs in tissues. Second, it is enriched in circulating HDLs and mediates their uptake by hepatocytes. APOE also plays an important role in lipid transport in the central nervous system, regulating neuron survival and sprouting. This is Apolipoprotein E (APOE) from Gorilla gorilla gorilla (Western lowland gorilla).